We begin with the raw amino-acid sequence, 135 residues long: ATP synthase epsilon chain, chloroplastic (135 aa).

It belongs to the ATPase epsilon chain family. As to quaternary structure, F-type ATPases have 2 components, CF(1) - the catalytic core - and CF(0) - the membrane proton channel. CF(1) has five subunits: alpha(3), beta(3), gamma(1), delta(1), epsilon(1). CF(0) has three main subunits: a, b and c.

The protein resides in the plastid. It localises to the chloroplast thylakoid membrane. Functionally, produces ATP from ADP in the presence of a proton gradient across the membrane. In Euglena gracilis, this protein is ATP synthase epsilon chain, chloroplastic.